Consider the following 243-residue polypeptide: MGRGPSIEARKNASDAKRGKIFTKIIREIGVAARGGGGDPNNNPRLRVAVDKGLAVNMSKDVIERAIKKATGELEGVDYEEIRYEGYAPGGVAVIVDCLTDNRVRTVADVRHAFSKCGGNMGTEGSVAFMFKRLGVLSFAPGADEEAITEAAIEAGADDIVVYPDDGSIDVVTSPDAFSAVKDAMAAAGHVADHAEITFRADNDIKVEGEVALQVKKLLDMLEDLDDVQDVYSNAELGADAYA.

Belongs to the TACO1 family.

It is found in the cytoplasm. This is Probable transcriptional regulatory protein Smlt3713 from Stenotrophomonas maltophilia (strain K279a).